Consider the following 587-residue polypeptide: General negative regulator of transcription subunit 4 (587 aa).

An RING-type zinc finger spans residues 33–78; that stretch reads CPLCIEPMDITDKNFFPCPCGYQICQFCYNNIRQNPELNGRCPACR. Residues 94-128 are a coiled coil; the sequence is EELKMERAKLARKEKERKHREKERKENEYTNRKHL. An RRM domain is found at 137 to 228; sequence NLVYVVGINP…YMDGRLIKAA (92 aa). The C3H1-type zinc finger occupies 229–256; sequence YGTTKYCSSYLRGLPCPNPNCMFLHEPG. Residue Lys270 forms a Glycyl lysine isopeptide (Lys-Gly) (interchain with G-Cter in ubiquitin) linkage. At Thr310 the chain carries Phosphothreonine. At Ser312 the chain carries Phosphoserine. Residue Thr326 is modified to Phosphothreonine. Ser360 carries the post-translational modification Phosphoserine. The disordered stretch occupies residues 370–412; the sequence is TLNDSLGHHTTPTTENTITSTTTTTNTNATSHSHGSKKKQSLA. Positions 377-402 are enriched in low complexity; sequence HHTTPTTENTITSTTTTTNTNATSHS.

In terms of assembly, forms a NOT protein complex that comprises NOT1, NOT2, NOT3, NOT4 and NOT5. Subunit of the 1.0 MDa CCR4-NOT core complex that contains CCR4, CAF1, NOT1, NOT2, NOT3, NOT4, NOT5, CAF40 and CAF130. In the complex interacts with NOT1. The core complex probably is part of a less characterized 1.9 MDa CCR4-NOT complex.

It localises to the cytoplasm. It is found in the nucleus. The enzyme catalyses S-ubiquitinyl-[E2 ubiquitin-conjugating enzyme]-L-cysteine + [acceptor protein]-L-lysine = [E2 ubiquitin-conjugating enzyme]-L-cysteine + N(6)-ubiquitinyl-[acceptor protein]-L-lysine.. Its pathway is protein modification; protein ubiquitination. E3 ubiquitin-protein ligase component of the CCR4-NOT core complex, which in the nucleus seems to be a general transcription factor, and in the cytoplasm the major mRNA deadenylase involved in mRNA turnover. The NOT protein subcomplex negatively regulates the basal and activated transcription of many genes. Preferentially affects TC-type TATA element-dependent transcription. Could directly or indirectly inhibit component(s) of the general transcription machinery. In the cytoplasm, catalyzes monoubiquitination of RPS7/es7 in response to stalled ribosomes, initiating a HEL2-dependent response that activates the No-Go Decay (NGD) pathway. This Saccharomyces cerevisiae (strain ATCC 204508 / S288c) (Baker's yeast) protein is General negative regulator of transcription subunit 4 (MOT2).